The chain runs to 607 residues: Arginine--tRNA ligase, cytoplasmic (607 aa).

Ala2 carries the N-acetylalanine modification. Ser15 carries the post-translational modification Phosphoserine. 2 interaction with tRNA regions span residues 59-60 (EW) and 106-111 (NGPFIQ). Residues 148–153 (EFSSPN), His162, Tyr347, Asp351, and Gln375 contribute to the L-arginine site. Positions 151 to 162 (SPNIAKPFHAGH) match the 'HIGH' region motif. Positions 484 to 498 (DTGPYLQYAHSRLRS) are interaction with tRNA.

The protein belongs to the class-I aminoacyl-tRNA synthetase family. Monomer.

The protein resides in the cytoplasm. It is found in the cytosol. The enzyme catalyses tRNA(Arg) + L-arginine + ATP = L-arginyl-tRNA(Arg) + AMP + diphosphate. Forms part of a macromolecular complex that catalyzes the attachment of specific amino acids to cognate tRNAs during protein synthesis. This is Arginine--tRNA ligase, cytoplasmic from Saccharomyces cerevisiae (strain ATCC 204508 / S288c) (Baker's yeast).